We begin with the raw amino-acid sequence, 336 residues long: 4-hydroxy-3-methylbut-2-enyl diphosphate reductase (336 aa).

The segment at 1–23 (MFGQRLDTLGAMSSSVSSPSPET) is disordered. Position 36 (cysteine 36) interacts with [4Fe-4S] cluster. Histidine 65 and histidine 98 together coordinate (2E)-4-hydroxy-3-methylbut-2-enyl diphosphate. The dimethylallyl diphosphate site is built by histidine 65 and histidine 98. Isopentenyl diphosphate is bound by residues histidine 65 and histidine 98. Cysteine 120 serves as a coordination point for [4Fe-4S] cluster. Histidine 148 serves as a coordination point for (2E)-4-hydroxy-3-methylbut-2-enyl diphosphate. Histidine 148 is a dimethylallyl diphosphate binding site. Isopentenyl diphosphate is bound at residue histidine 148. Glutamate 150 (proton donor) is an active-site residue. A (2E)-4-hydroxy-3-methylbut-2-enyl diphosphate-binding site is contributed by threonine 190. Cysteine 220 contributes to the [4Fe-4S] cluster binding site. Residues serine 248, serine 249, asparagine 250, and serine 293 each contribute to the (2E)-4-hydroxy-3-methylbut-2-enyl diphosphate site. Positions 248, 249, 250, and 293 each coordinate dimethylallyl diphosphate. Positions 248, 249, 250, and 293 each coordinate isopentenyl diphosphate.

Belongs to the IspH family. The cofactor is [4Fe-4S] cluster.

It carries out the reaction isopentenyl diphosphate + 2 oxidized [2Fe-2S]-[ferredoxin] + H2O = (2E)-4-hydroxy-3-methylbut-2-enyl diphosphate + 2 reduced [2Fe-2S]-[ferredoxin] + 2 H(+). The catalysed reaction is dimethylallyl diphosphate + 2 oxidized [2Fe-2S]-[ferredoxin] + H2O = (2E)-4-hydroxy-3-methylbut-2-enyl diphosphate + 2 reduced [2Fe-2S]-[ferredoxin] + 2 H(+). It functions in the pathway isoprenoid biosynthesis; dimethylallyl diphosphate biosynthesis; dimethylallyl diphosphate from (2E)-4-hydroxy-3-methylbutenyl diphosphate: step 1/1. It participates in isoprenoid biosynthesis; isopentenyl diphosphate biosynthesis via DXP pathway; isopentenyl diphosphate from 1-deoxy-D-xylulose 5-phosphate: step 6/6. Its function is as follows. Catalyzes the conversion of 1-hydroxy-2-methyl-2-(E)-butenyl 4-diphosphate (HMBPP) into a mixture of isopentenyl diphosphate (IPP) and dimethylallyl diphosphate (DMAPP). Acts in the terminal step of the DOXP/MEP pathway for isoprenoid precursor biosynthesis. This is 4-hydroxy-3-methylbut-2-enyl diphosphate reductase from Corynebacterium efficiens (strain DSM 44549 / YS-314 / AJ 12310 / JCM 11189 / NBRC 100395).